We begin with the raw amino-acid sequence, 406 residues long: Probable tRNA sulfurtransferase (406 aa).

Residues 60–166 (EPVMERLKQV…LNGIYLTSAK (107 aa)) form the THUMP domain. ATP-binding positions include 184-185 (ML), 209-210 (HF), R266, G288, and Q297.

It belongs to the ThiI family.

Its subcellular location is the cytoplasm. The enzyme catalyses [ThiI sulfur-carrier protein]-S-sulfanyl-L-cysteine + a uridine in tRNA + 2 reduced [2Fe-2S]-[ferredoxin] + ATP + H(+) = [ThiI sulfur-carrier protein]-L-cysteine + a 4-thiouridine in tRNA + 2 oxidized [2Fe-2S]-[ferredoxin] + AMP + diphosphate. It carries out the reaction [ThiS sulfur-carrier protein]-C-terminal Gly-Gly-AMP + S-sulfanyl-L-cysteinyl-[cysteine desulfurase] + AH2 = [ThiS sulfur-carrier protein]-C-terminal-Gly-aminoethanethioate + L-cysteinyl-[cysteine desulfurase] + A + AMP + 2 H(+). It participates in cofactor biosynthesis; thiamine diphosphate biosynthesis. Functionally, catalyzes the ATP-dependent transfer of a sulfur to tRNA to produce 4-thiouridine in position 8 of tRNAs, which functions as a near-UV photosensor. Also catalyzes the transfer of sulfur to the sulfur carrier protein ThiS, forming ThiS-thiocarboxylate. This is a step in the synthesis of thiazole, in the thiamine biosynthesis pathway. The sulfur is donated as persulfide by IscS. The chain is Probable tRNA sulfurtransferase from Limosilactobacillus fermentum (strain NBRC 3956 / LMG 18251) (Lactobacillus fermentum).